Consider the following 1331-residue polypeptide: DNA-directed RNA polymerase subunit beta' (1331 aa).

The Zn(2+) site is built by cysteine 60, cysteine 62, cysteine 75, and cysteine 78. Mg(2+)-binding residues include aspartate 535, aspartate 537, and aspartate 539. Zn(2+)-binding residues include cysteine 902, cysteine 979, cysteine 986, and cysteine 989.

The protein belongs to the RNA polymerase beta' chain family. As to quaternary structure, the RNAP catalytic core consists of 2 alpha, 1 beta, 1 beta' and 1 omega subunit. When a sigma factor is associated with the core the holoenzyme is formed, which can initiate transcription. It depends on Mg(2+) as a cofactor. Requires Zn(2+) as cofactor.

The catalysed reaction is RNA(n) + a ribonucleoside 5'-triphosphate = RNA(n+1) + diphosphate. DNA-dependent RNA polymerase catalyzes the transcription of DNA into RNA using the four ribonucleoside triphosphates as substrates. The sequence is that of DNA-directed RNA polymerase subunit beta' from Corynebacterium aurimucosum (strain ATCC 700975 / DSM 44827 / CIP 107346 / CN-1) (Corynebacterium nigricans).